We begin with the raw amino-acid sequence, 498 residues long: Heat stress transcription factor A-3 (498 aa).

Residues 156–180 (RRRSSPTQQSGLQPGSSGESGLDPE) are disordered. The segment covering 160–174 (SPTQQSGLQPGSSGE) has biased composition (polar residues). Residues 180 to 235 (ELNTLRREKSALLQEVTRLKQEHLQTIEQMSTLNQRLESAEDRQKQMVSFLAKLLQ) are a coiled coil. Residues 184–234 (LRREKSALLQEVTRLKQEHLQTIEQMSTLNQRLESAEDRQKQMVSFLAKLL) are hydrophobic repeat HR-A/B. The Nuclear localization signal motif lies at 258-263 (KRKFLK). The tract at residues 263-291 (KHVPHGNIDSGESSSQHTGESNLDFSPTS) is disordered. Residues 272 to 291 (SGESSSQHTGESNLDFSPTS) show a composition bias toward polar residues. Positions 309-316 (LEDGDLNL) match the Nuclear export signal motif. The interval 356 to 382 (LEIPPASGPRGQDPTIGRSKGKNVLSP) is disordered.

It belongs to the HSF family. Class A subfamily. As to quaternary structure, homotrimer. Exhibits temperature-dependent phosphorylation.

The protein localises to the cytoplasm. The protein resides in the nucleus. Functionally, transcriptional regulator that specifically binds DNA of heat shock promoter elements (HSE). The chain is Heat stress transcription factor A-3 (HSFA3) from Oryza sativa subsp. japonica (Rice).